The following is a 568-amino-acid chain: MATMDRQSYAQMFGPTTGDRVRLGDTDIWIQVEKDFTVYGDEVKFGGGKVIRDGMGQSQVTNEIAVDLVITNALVLDHWGIVKGDVGIKDGRIFKVGKAGNPDVQDNVDIVVGPGTEVIAGEGSILTAGGIDAHIHFICPQQVEEALTSGVTTMIGGGTGPATGTKATTCTSGPWYLGKMLQATDSMPMNLGFLGKGNASLPEALEEQLEAGACGLKLHEDWGTTPASIDCCLSVAEAYDVQVAIHTDTLNESGFVDSTIDAFKDRVIHTYHTEGAGGGHAPDIIQACSNPNVLPSSTNPTRPYTHNTVDEHLDMLMVCHHLDSNIEEDVAFADSRIRKETIAAEDILHDRGAFSMISSDSQAMGRVGEVVTRTWQTAHKMKQQFGLLPEDQELGADNFRARRYIAKYTINPAIAHGISHEVGSIEPGKMADLVLWKPAFFAVKPSMIIKGGMIASAPMGDPNASIPTPQPVHYRPMFGSCGKAAAATSVTFVSKAALNNGLKESLGLERTLVACKNTRNISKLDMIHNDWLPNITVDPQTYEVRADGELLTCEPAETLPLAQLYTLF.

Residues His-134, His-136, and Lys-217 each contribute to the Ni(2+) site. Lys-217 is subject to N6-carboxylysine. His-219 contributes to the substrate binding site. Residues His-246 and His-272 each coordinate Ni(2+). His-320 (proton donor) is an active-site residue. Position 360 (Asp-360) interacts with Ni(2+).

Belongs to the metallo-dependent hydrolases superfamily. Urease alpha subunit family. In terms of assembly, heterotrimer of UreA (gamma), UreB (beta) and UreC (alpha) subunits. Three heterotrimers associate to form the active enzyme. The cofactor is Ni cation. Carboxylation allows a single lysine to coordinate two nickel ions.

Its subcellular location is the cytoplasm. The enzyme catalyses urea + 2 H2O + H(+) = hydrogencarbonate + 2 NH4(+). It participates in nitrogen metabolism; urea degradation; CO(2) and NH(3) from urea (urease route): step 1/1. This Marinomonas sp. (strain MWYL1) protein is Urease subunit alpha.